The sequence spans 241 residues: Lipopolysaccharide export system ATP-binding protein LptB (241 aa).

An ABC transporter domain is found at 4-237 (LTAKNLAKAY…EHVKRVYLGE (234 aa)). Residue 36 to 43 (GPNGAGKT) participates in ATP binding.

This sequence belongs to the ABC transporter superfamily. Outer membrane lipopolysaccharide export (TC 1.B.42) family. Component of the lipopolysaccharide transport and assembly complex. The LptBFG transporter is composed of two ATP-binding proteins (LptB) and two transmembrane proteins (LptF and LptG).

It localises to the cytoplasm. It is found in the cell inner membrane. In terms of biological role, part of the ABC transporter complex LptBFG involved in the translocation of lipopolysaccharide (LPS) from the inner membrane to the outer membrane. Probably responsible for energy coupling to the transport system. In Escherichia coli O157:H7, this protein is Lipopolysaccharide export system ATP-binding protein LptB (lptB).